A 249-amino-acid polypeptide reads, in one-letter code: Uridylate kinase (249 aa).

Residue 23–26 coordinates ATP; that stretch reads KISG. The segment at 31 to 36 is involved in allosteric activation by GTP; that stretch reads GDQGFG. Glycine 65 contributes to the UMP binding site. ATP-binding residues include glycine 66 and arginine 70. UMP is bound by residues aspartate 85 and 146-153; that span reads TGNPYFTT. Residues threonine 173, tyrosine 179, and aspartate 182 each contribute to the ATP site.

It belongs to the UMP kinase family. Homohexamer.

It is found in the cytoplasm. It catalyses the reaction UMP + ATP = UDP + ADP. It functions in the pathway pyrimidine metabolism; CTP biosynthesis via de novo pathway; UDP from UMP (UMPK route): step 1/1. With respect to regulation, allosterically activated by GTP. Inhibited by UTP. In terms of biological role, catalyzes the reversible phosphorylation of UMP to UDP. The polypeptide is Uridylate kinase (Jannaschia sp. (strain CCS1)).